A 163-amino-acid chain; its full sequence is Transcription elongation factor GreB (163 aa).

This sequence belongs to the GreA/GreB family. GreB subfamily.

Functionally, necessary for efficient RNA polymerase transcription elongation past template-encoded arresting sites. The arresting sites in DNA have the property of trapping a certain fraction of elongating RNA polymerases that pass through, resulting in locked ternary complexes. Cleavage of the nascent transcript by cleavage factors such as GreA or GreB allows the resumption of elongation from the new 3'terminus. GreB releases sequences of up to 9 nucleotides in length. The sequence is that of Transcription elongation factor GreB from Vibrio parahaemolyticus serotype O3:K6 (strain RIMD 2210633).